We begin with the raw amino-acid sequence, 558 residues long: Polypeptide N-acetylgalactosaminyltransferase 16 (558 aa).

Residues 1–6 (MRKIRA) are Cytoplasmic-facing. The chain crosses the membrane as a helical; Signal-anchor for type II membrane protein span at residues 7 to 26 (NAIAILTVAWILGTFYYLWQ). The Lumenal segment spans residues 27-558 (DNRAHAASSS…AQQWQLLPHT (532 aa)). A compositionally biased stretch (low complexity) spans 34–46 (SSSGRGAQRAGGR). The tract at residues 34–53 (SSSGRGAQRAGGRPEQLRED) is disordered. 5 disulfide bridges follow: Cys-113-Cys-340, Cys-331-Cys-409, Cys-441-Cys-460, Cys-486-Cys-506, and Cys-530-Cys-543. The interval 122–227 (LPATSVIITF…VEWLQPMLQR (106 aa)) is catalytic subdomain A. Substrate-binding residues include Asp-163 and Arg-188. Asp-211 lines the Mn(2+) pocket. A substrate-binding site is contributed by Ser-212. His-213 serves as a coordination point for Mn(2+). Residues 286–348 (PIRTPVIAGG…PCSRVGHVFR (63 aa)) form a catalytic subdomain B region. Residue Trp-317 participates in substrate binding. His-345 is a Mn(2+) binding site. Residues Arg-348, His-351, and Tyr-353 each contribute to the substrate site. Residues 428 to 555 (KEVLPGVIKQ…DAQAQQWQLL (128 aa)) form the Ricin B-type lectin domain.

The protein belongs to the glycosyltransferase 2 family. GalNAc-T subfamily. The cofactor is Mn(2+). In terms of tissue distribution, in the CNS, it is predominantly expressed in several distinct hypothalamic, thalamic and amygdaloid nuclei. The most abundant level of expression is in the paraventricular, ventromedial and arcuate nuclei of the hypothalamus, the anterodorsal and parafascicular nuclei of the thalamus and the central, basomedial and medial nuclei of the amygdala. Also expressed in cerebral cortex, lateral septum, habenula and hippocampus.

The protein localises to the golgi apparatus membrane. The catalysed reaction is L-seryl-[protein] + UDP-N-acetyl-alpha-D-galactosamine = a 3-O-[N-acetyl-alpha-D-galactosaminyl]-L-seryl-[protein] + UDP + H(+). The enzyme catalyses L-threonyl-[protein] + UDP-N-acetyl-alpha-D-galactosamine = a 3-O-[N-acetyl-alpha-D-galactosaminyl]-L-threonyl-[protein] + UDP + H(+). Its pathway is protein modification; protein glycosylation. Catalyzes the initial reaction in O-linked oligosaccharide biosynthesis, the transfer of an N-acetyl-D-galactosamine residue to a serine or threonine residue on the protein receptor. This Mus musculus (Mouse) protein is Polypeptide N-acetylgalactosaminyltransferase 16 (Galnt16).